A 555-amino-acid chain; its full sequence is 2-succinyl-5-enolpyruvyl-6-hydroxy-3-cyclohexene-1-carboxylate synthase (555 aa).

It belongs to the TPP enzyme family. MenD subfamily. In terms of assembly, homodimer. Mg(2+) serves as cofactor. The cofactor is Mn(2+). It depends on thiamine diphosphate as a cofactor.

The catalysed reaction is isochorismate + 2-oxoglutarate + H(+) = 5-enolpyruvoyl-6-hydroxy-2-succinyl-cyclohex-3-ene-1-carboxylate + CO2. Its pathway is quinol/quinone metabolism; 1,4-dihydroxy-2-naphthoate biosynthesis; 1,4-dihydroxy-2-naphthoate from chorismate: step 2/7. It functions in the pathway quinol/quinone metabolism; menaquinone biosynthesis. Catalyzes the thiamine diphosphate-dependent decarboxylation of 2-oxoglutarate and the subsequent addition of the resulting succinic semialdehyde-thiamine pyrophosphate anion to isochorismate to yield 2-succinyl-5-enolpyruvyl-6-hydroxy-3-cyclohexene-1-carboxylate (SEPHCHC). This chain is 2-succinyl-5-enolpyruvyl-6-hydroxy-3-cyclohexene-1-carboxylate synthase, found in Bacteroides fragilis (strain ATCC 25285 / DSM 2151 / CCUG 4856 / JCM 11019 / LMG 10263 / NCTC 9343 / Onslow / VPI 2553 / EN-2).